A 142-amino-acid polypeptide reads, in one-letter code: Hemoglobin subunit alpha (142 aa).

The Globin domain occupies 2-142; that stretch reads VLSPADKSNV…VSTVLTSKYR (141 aa). The residue at position 4 (S4) is a Phosphoserine. An N6-succinyllysine mark is found at K8 and K12. Residue K17 is modified to N6-acetyllysine; alternate. K17 carries the N6-succinyllysine; alternate modification. The residue at position 25 (Y25) is a Phosphotyrosine. Residue S36 is modified to Phosphoserine. K41 is subject to N6-succinyllysine. Phosphoserine is present on S50. H59 provides a ligand contact to O2. H88 contacts heme b. Residue S103 is modified to Phosphoserine. At T109 the chain carries Phosphothreonine. Residues S125 and S132 each carry the phosphoserine modification. Phosphothreonine occurs at positions 135 and 138. S139 bears the Phosphoserine mark.

Belongs to the globin family. As to quaternary structure, heterotetramer of two alpha chains and two beta chains. Red blood cells.

Involved in oxygen transport from the lung to the various peripheral tissues. In terms of biological role, hemopressin acts as an antagonist peptide of the cannabinoid receptor CNR1. Hemopressin-binding efficiently blocks cannabinoid receptor CNR1 and subsequent signaling. The sequence is that of Hemoglobin subunit alpha (HBA) from Macaca fuscata fuscata (Japanese macaque).